A 235-amino-acid polypeptide reads, in one-letter code: tRNA (guanine-N(1)-)-methyltransferase (235 aa).

Residues Gly112 and Leu131–Leu136 each bind S-adenosyl-L-methionine.

The protein belongs to the RNA methyltransferase TrmD family. In terms of assembly, homodimer.

The protein resides in the cytoplasm. The enzyme catalyses guanosine(37) in tRNA + S-adenosyl-L-methionine = N(1)-methylguanosine(37) in tRNA + S-adenosyl-L-homocysteine + H(+). Functionally, specifically methylates guanosine-37 in various tRNAs. The protein is tRNA (guanine-N(1)-)-methyltransferase of Synechococcus elongatus (strain ATCC 33912 / PCC 7942 / FACHB-805) (Anacystis nidulans R2).